The chain runs to 326 residues: Protein ORF5 in retron Ec67 (326 aa).

A disordered region spans residues 1 to 24 (MGKSKKNRAAATNQLKHKSQTSAE). Over residues 10–24 (AATNQLKHKSQTSAE) the composition is skewed to polar residues.

The protein belongs to the phage portal family. PBSX subfamily.

The polypeptide is Protein ORF5 in retron Ec67 (Escherichia coli).